The primary structure comprises 204 residues: Cytochrome b6 (204 aa).

A helical membrane pass occupies residues 23-43 (YCLGGITLTSFLVQVATGSAM). Cys24 lines the heme c pocket. Heme b-binding residues include His75 and His89. 3 consecutive transmembrane segments (helical) span residues 81-101 (MMVL…GFKK), 107-127 (WVTG…GYSL), and 136-157 (AVKI…LVEL). The heme b site is built by His176 and His191. The chain crosses the membrane as a helical span at residues 177–197 (TFILPLLTAVFMPMHFLMIRK).

The protein belongs to the cytochrome b family. PetB subfamily. The 4 large subunits of the cytochrome b6-f complex are cytochrome b6, subunit IV (17 kDa polypeptide, PetD), cytochrome f and the Rieske protein, while the 4 small subunits are PetG, PetL, PetM and PetN. The complex functions as a dimer. It depends on heme b as a cofactor. The cofactor is heme c.

The protein localises to the plastid. It is found in the chloroplast thylakoid membrane. Functionally, component of the cytochrome b6-f complex, which mediates electron transfer between photosystem II (PSII) and photosystem I (PSI), cyclic electron flow around PSI, and state transitions. The polypeptide is Cytochrome b6 (Picea abies (Norway spruce)).